The chain runs to 333 residues: 4-hydroxy-3-methylbut-2-enyl diphosphate reductase (333 aa).

A [4Fe-4S] cluster-binding site is contributed by cysteine 20. (2E)-4-hydroxy-3-methylbut-2-enyl diphosphate is bound by residues histidine 49 and histidine 85. Histidine 49 and histidine 85 together coordinate dimethylallyl diphosphate. Residues histidine 49 and histidine 85 each coordinate isopentenyl diphosphate. A [4Fe-4S] cluster-binding site is contributed by cysteine 107. Histidine 135 provides a ligand contact to (2E)-4-hydroxy-3-methylbut-2-enyl diphosphate. Residue histidine 135 coordinates dimethylallyl diphosphate. Histidine 135 is an isopentenyl diphosphate binding site. Catalysis depends on glutamate 137, which acts as the Proton donor. Threonine 176 serves as a coordination point for (2E)-4-hydroxy-3-methylbut-2-enyl diphosphate. Cysteine 206 is a [4Fe-4S] cluster binding site. Residues serine 234, serine 235, asparagine 236, and serine 279 each contribute to the (2E)-4-hydroxy-3-methylbut-2-enyl diphosphate site. Residues serine 234, serine 235, asparagine 236, and serine 279 each contribute to the dimethylallyl diphosphate site. Positions 234, 235, 236, and 279 each coordinate isopentenyl diphosphate.

It belongs to the IspH family. [4Fe-4S] cluster serves as cofactor.

The enzyme catalyses isopentenyl diphosphate + 2 oxidized [2Fe-2S]-[ferredoxin] + H2O = (2E)-4-hydroxy-3-methylbut-2-enyl diphosphate + 2 reduced [2Fe-2S]-[ferredoxin] + 2 H(+). It carries out the reaction dimethylallyl diphosphate + 2 oxidized [2Fe-2S]-[ferredoxin] + H2O = (2E)-4-hydroxy-3-methylbut-2-enyl diphosphate + 2 reduced [2Fe-2S]-[ferredoxin] + 2 H(+). Its pathway is isoprenoid biosynthesis; dimethylallyl diphosphate biosynthesis; dimethylallyl diphosphate from (2E)-4-hydroxy-3-methylbutenyl diphosphate: step 1/1. The protein operates within isoprenoid biosynthesis; isopentenyl diphosphate biosynthesis via DXP pathway; isopentenyl diphosphate from 1-deoxy-D-xylulose 5-phosphate: step 6/6. In terms of biological role, catalyzes the conversion of 1-hydroxy-2-methyl-2-(E)-butenyl 4-diphosphate (HMBPP) into a mixture of isopentenyl diphosphate (IPP) and dimethylallyl diphosphate (DMAPP). Acts in the terminal step of the DOXP/MEP pathway for isoprenoid precursor biosynthesis. The sequence is that of 4-hydroxy-3-methylbut-2-enyl diphosphate reductase from Rhizobium johnstonii (strain DSM 114642 / LMG 32736 / 3841) (Rhizobium leguminosarum bv. viciae).